A 672-amino-acid polypeptide reads, in one-letter code: Hydroxyproline O-galactosyltransferase GALT5 (672 aa).

The Cytoplasmic portion of the chain corresponds to 1–28; that stretch reads MKKPKLSKVEKIDKIDLFSSLWKQRSVR. Residues 29 to 49 form a helical; Signal-anchor for type II membrane protein membrane-spanning segment; sequence VIMAIGFLYLVIVSVEIPLVF. The Lumenal portion of the chain corresponds to 50 to 672; that stretch reads KSWSSSSVPL…QNKPECCNMR (623 aa). The region spanning 191–392 is the Galectin domain; the sequence is KLMELPCGLT…DIDVHSVFVA (202 aa). Residues N306 and N620 are each glycosylated (N-linked (GlcNAc...) asparagine).

It belongs to the glycosyltransferase 31 family. Requires Mn(2+) as cofactor. As to expression, expressed in juvenile leaves, stems, cauline leaves and siliques.

The protein resides in the golgi apparatus membrane. The protein operates within protein modification; protein glycosylation. Functionally, possesses hydroxyproline O-galactosyltransferase activity. Transfers galactose from UDP-galactose to hydroxyproline residues in the arabinogalactan proteins (AGPs). Is specific for AGPs containing non-contiguous peptidyl hydroxyproline residues. Utilizes UDP-galactose solely as sugar donor. The addition of galactose onto the peptidyl hydroxyproline residues in AGP core proteins represents the first committed step in arabinogalactan polysaccharide addition. AGP glycans play essential roles in both vegetative and reproductive plant growth. This Arabidopsis thaliana (Mouse-ear cress) protein is Hydroxyproline O-galactosyltransferase GALT5.